Reading from the N-terminus, the 207-residue chain is Dephospho-CoA kinase (207 aa).

Over residues 1 to 11 the composition is skewed to polar residues; sequence MTRSPAPSSPT. The segment at 1-21 is disordered; the sequence is MTRSPAPSSPTHPRRLGLTGS. Residues 15-207 form the DPCK domain; that stretch reads RLGLTGSIGA…DAALRQLEIT (193 aa). 23–28 contributes to the ATP binding site; sequence GAGKST.

This sequence belongs to the CoaE family.

It localises to the cytoplasm. The catalysed reaction is 3'-dephospho-CoA + ATP = ADP + CoA + H(+). Its pathway is cofactor biosynthesis; coenzyme A biosynthesis; CoA from (R)-pantothenate: step 5/5. Catalyzes the phosphorylation of the 3'-hydroxyl group of dephosphocoenzyme A to form coenzyme A. The polypeptide is Dephospho-CoA kinase (Deinococcus radiodurans (strain ATCC 13939 / DSM 20539 / JCM 16871 / CCUG 27074 / LMG 4051 / NBRC 15346 / NCIMB 9279 / VKM B-1422 / R1)).